Consider the following 90-residue polypeptide: Acylphosphatase (90 aa).

The 86-residue stretch at 5–90 (SYLFNVKGKV…WQELTDFKMY (86 aa)) folds into the Acylphosphatase-like domain. Active-site residues include arginine 20 and asparagine 38.

It belongs to the acylphosphatase family.

It carries out the reaction an acyl phosphate + H2O = a carboxylate + phosphate + H(+). The protein is Acylphosphatase (acyP) of Aliivibrio fischeri (strain ATCC 700601 / ES114) (Vibrio fischeri).